Reading from the N-terminus, the 1786-residue chain is Protein TIC 214 (1786 aa).

6 helical membrane passes run 19–39, 68–88, 91–111, 133–153, 176–196, and 227–247; these read IINSVVVVGLYYGFLTTFSIG, FIAGQLMMFISIYYAPLHLAL, PHTITVLALPYLLFHFFWNNH, VFLNNLIFQLFNHFILPSSML, VGWLIGHILFMKWVGLVLVWI, and IFSILLFITCVYYLGRIPSPI. The stretch at 1007–1046 forms a coiled coil; it reads SLSEKKIKNLIDRKKTIRNQIEEISKEKQNLTNSCTKLRY.

It belongs to the TIC214 family. Part of the Tic complex. Component of the 1-MD complex, composed of TIC20-I, TIC214, TIC100 and TIC56. Interacts with the translocating preproteins. Hydrolysis of ATP is essential for the formation of this complex. The 1-MD complex interacts with TIC21.

The protein localises to the plastid. The protein resides in the chloroplast inner membrane. Its function is as follows. Involved in protein precursor import into chloroplasts. May be part of an intermediate translocation complex acting as a protein-conducting channel at the inner envelope. This chain is Protein TIC 214, found in Arabidopsis thaliana (Mouse-ear cress).